The chain runs to 326 residues: tRNA-cytidine(32) 2-sulfurtransferase (326 aa).

The PP-loop motif signature appears at 63-68 (SGGKDS). [4Fe-4S] cluster-binding residues include cysteine 138, cysteine 141, and cysteine 229.

It belongs to the TtcA family. As to quaternary structure, homodimer. Requires Mg(2+) as cofactor. The cofactor is [4Fe-4S] cluster.

It localises to the cytoplasm. It catalyses the reaction cytidine(32) in tRNA + S-sulfanyl-L-cysteinyl-[cysteine desulfurase] + AH2 + ATP = 2-thiocytidine(32) in tRNA + L-cysteinyl-[cysteine desulfurase] + A + AMP + diphosphate + H(+). It participates in tRNA modification. Catalyzes the ATP-dependent 2-thiolation of cytidine in position 32 of tRNA, to form 2-thiocytidine (s(2)C32). The sulfur atoms are provided by the cysteine/cysteine desulfurase (IscS) system. This Leptothrix cholodnii (strain ATCC 51168 / LMG 8142 / SP-6) (Leptothrix discophora (strain SP-6)) protein is tRNA-cytidine(32) 2-sulfurtransferase.